The following is a 407-amino-acid chain: uncharacterized protein (407 aa).

The first 27 residues, 1-27, serve as a signal peptide directing secretion; sequence MRILAMTRAHNAGRTLAATLDSLAVFS.

This is an uncharacterized protein from Mycobacterium bovis (strain ATCC BAA-935 / AF2122/97).